The primary structure comprises 57 residues: MAVPKKKTSKAKRDQRRATWRRQAALQAQRALSLGKSVLTGRSNSFVYPEDEDEDED.

Residues 1–20 (MAVPKKKTSKAKRDQRRATW) show a composition bias toward basic residues. The segment at 1 to 24 (MAVPKKKTSKAKRDQRRATWRRQA) is disordered.

Belongs to the bacterial ribosomal protein bL32 family.

The protein is Large ribosomal subunit protein bL32 of Gloeothece citriformis (strain PCC 7424) (Cyanothece sp. (strain PCC 7424)).